The primary structure comprises 380 residues: Cytochrome b (380 aa).

4 helical membrane passes run F33 to M53, W77 to I98, W113 to L133, and F178 to L198. The heme b site is built by H83 and H97. Heme b is bound by residues H182 and H196. An a ubiquinone-binding site is contributed by H201. 4 helical membrane passes run Y226–S246, L288–H308, V320–G340, and F347–P367.

Belongs to the cytochrome b family. The cytochrome bc1 complex contains 3 respiratory subunits (MT-CYB, CYC1 and UQCRFS1), 2 core proteins (UQCRC1 and UQCRC2) and probably 6 low-molecular weight proteins. It depends on heme b as a cofactor.

The protein resides in the mitochondrion inner membrane. Component of the ubiquinol-cytochrome c reductase complex (complex III or cytochrome b-c1 complex) that is part of the mitochondrial respiratory chain. The b-c1 complex mediates electron transfer from ubiquinol to cytochrome c. Contributes to the generation of a proton gradient across the mitochondrial membrane that is then used for ATP synthesis. The polypeptide is Cytochrome b (mt-cyb) (Kareius bicoloratus (Stone flounder)).